The chain runs to 256 residues: 5'-nucleotidase SurE (256 aa).

A divalent metal cation is bound by residues D13, D14, S44, and N101.

This sequence belongs to the SurE nucleotidase family. The cofactor is a divalent metal cation.

The protein localises to the cytoplasm. It carries out the reaction a ribonucleoside 5'-phosphate + H2O = a ribonucleoside + phosphate. In terms of biological role, nucleotidase that shows phosphatase activity on nucleoside 5'-monophosphates. The protein is 5'-nucleotidase SurE of Porphyromonas gingivalis (strain ATCC 33277 / DSM 20709 / CIP 103683 / JCM 12257 / NCTC 11834 / 2561).